A 246-amino-acid polypeptide reads, in one-letter code: Small ribosomal subunit protein uS2 (246 aa).

Belongs to the universal ribosomal protein uS2 family.

The chain is Small ribosomal subunit protein uS2 from Helicobacter acinonychis (strain Sheeba).